The following is a 150-amino-acid chain: Cytochrome c oxidase subunit 5A, mitochondrial (150 aa).

A mitochondrion-targeting transit peptide spans 1–41; sequence MLGAALRRCAVAATTRAGPRGLLHSARTPGPAAAIQSVRCY. Residues 2 to 17 carry the SIFI-degron motif; it reads LGAALRRCAVAATTRA. 2 positions are modified to N6-acetyllysine: Lys-87 and Lys-113. At Thr-141 the chain carries Phosphothreonine.

It belongs to the cytochrome c oxidase subunit 5A family. Component of the cytochrome c oxidase (complex IV, CIV), a multisubunit enzyme composed of 14 subunits. The complex is composed of a catalytic core of 3 subunits MT-CO1, MT-CO2 and MT-CO3, encoded in the mitochondrial DNA, and 11 supernumerary subunits COX4I, COX5A, COX5B, COX6A, COX6B, COX6C, COX7A, COX7B, COX7C, COX8 and NDUFA4, which are encoded in the nuclear genome. The complex exists as a monomer or a dimer and forms supercomplexes (SCs) in the inner mitochondrial membrane with NADH-ubiquinone oxidoreductase (complex I, CI) and ubiquinol-cytochrome c oxidoreductase (cytochrome b-c1 complex, complex III, CIII), resulting in different assemblies (supercomplex SCI(1)III(2)IV(1) and megacomplex MCI(2)III(2)IV(2)). Interacts with AFG1L. Interacts with RAB5IF. In response to mitochondrial stress, the precursor protein is ubiquitinated by the SIFI complex in the cytoplasm before mitochondrial import, leading to its degradation. Within the SIFI complex, UBR4 initiates ubiquitin chain that are further elongated or branched by KCMF1.

The protein localises to the mitochondrion inner membrane. Its pathway is energy metabolism; oxidative phosphorylation. Component of the cytochrome c oxidase, the last enzyme in the mitochondrial electron transport chain which drives oxidative phosphorylation. The respiratory chain contains 3 multisubunit complexes succinate dehydrogenase (complex II, CII), ubiquinol-cytochrome c oxidoreductase (cytochrome b-c1 complex, complex III, CIII) and cytochrome c oxidase (complex IV, CIV), that cooperate to transfer electrons derived from NADH and succinate to molecular oxygen, creating an electrochemical gradient over the inner membrane that drives transmembrane transport and the ATP synthase. Cytochrome c oxidase is the component of the respiratory chain that catalyzes the reduction of oxygen to water. Electrons originating from reduced cytochrome c in the intermembrane space (IMS) are transferred via the dinuclear copper A center (CU(A)) of subunit 2 and heme A of subunit 1 to the active site in subunit 1, a binuclear center (BNC) formed by heme A3 and copper B (CU(B)). The BNC reduces molecular oxygen to 2 water molecules using 4 electrons from cytochrome c in the IMS and 4 protons from the mitochondrial matrix. In Gorilla gorilla gorilla (Western lowland gorilla), this protein is Cytochrome c oxidase subunit 5A, mitochondrial (COX5A).